A 251-amino-acid polypeptide reads, in one-letter code: 2,3-bisphosphoglycerate-dependent phosphoglycerate mutase (251 aa).

Substrate-binding positions include 13-20 (RHGESEWN), 26-27 (TG), R65, 92-95 (ERHY), K103, 119-120 (RR), and 186-187 (GN). The Tele-phosphohistidine intermediate role is filled by H14. E92 functions as the Proton donor/acceptor in the catalytic mechanism.

This sequence belongs to the phosphoglycerate mutase family. BPG-dependent PGAM subfamily.

The enzyme catalyses (2R)-2-phosphoglycerate = (2R)-3-phosphoglycerate. The protein operates within carbohydrate degradation; glycolysis; pyruvate from D-glyceraldehyde 3-phosphate: step 3/5. Functionally, catalyzes the interconversion of 2-phosphoglycerate and 3-phosphoglycerate. In Rhodococcus jostii (strain RHA1), this protein is 2,3-bisphosphoglycerate-dependent phosphoglycerate mutase.